Consider the following 621-residue polypeptide: uncharacterized protein (621 aa).

Low complexity-rich tracts occupy residues 1 to 10 (MIEDNINNNE), 63 to 79 (TEPLTTQLSSSPTTTPS), 137 to 182 (NNNN…NNFN), and 309 to 347 (NQSIQQLQQQQQQQQQQQQQQNNNDNNNNNNNNNNNNNN). Disordered stretches follow at residues 1–29 (MIEDNINNNENENEDKNGNGNENENDKNN), 63–100 (TEPLTTQLSSSPTTTPSLKKRKPKTVRNPFIGPSSNKT), 135–194 (DDNN…KDND), 307–374 (KTNQ…EDDT), 430–471 (YNNN…IAKR), 492–539 (KQSQ…IKII), and 594–614 (PTQINSNSSNNIVSPSSSPSK). Over residues 348 to 357 (STLTSSNSLS) the composition is skewed to polar residues. Low complexity-rich tracts occupy residues 431 to 459 (NNNNNNNNNNNNNNNNNNNNNNNNNNNNN), 496 to 539 (NNNN…IKII), and 597 to 613 (INSNSSNNIVSPSSSPS).

This is an uncharacterized protein from Dictyostelium discoideum (Social amoeba).